A 912-amino-acid chain; its full sequence is Metabotropic glutamate receptor 4 (912 aa).

An N-terminal signal peptide occupies residues 1–32 (MSGKGGWAWWWARLPLCLLLSLYAPWVPSSLG). At 33–587 (KPKGHPHMNS…IVKLEWDSPW (555 aa)) the chain is on the extracellular side. A disulfide bond links C67 and C109. N98 carries an N-linked (GlcNAc...) asparagine glycan. L-glutamate-binding positions include S159, 180–182 (AST), and Y230. Disulfide bonds link C249-C538, C372-C388, C428-C435, C520-C539, C524-C542, C545-C557, and C560-C573. N301 carries an N-linked (GlcNAc...) asparagine glycan. L-glutamate is bound at residue D312. K405 lines the L-glutamate pocket. 2 N-linked (GlcNAc...) asparagine glycosylation sites follow: N454 and N484. An N-linked (GlcNAc...) asparagine glycan is attached at N569. The chain crosses the membrane as a helical span at residues 588 to 610 (AVLPLFLAVVGIAATLFVVVTFV). Topologically, residues 611-624 (RYNDTPIVKASGRE) are cytoplasmic. A helical transmembrane segment spans residues 625–645 (LSYVLLAGIFLCYATTFLMIA). The Extracellular segment spans residues 646 to 656 (EPDLGTCSLRR). The helical transmembrane segment at 657–675 (IFLGLGMSISYAALLTKTN) threads the bilayer. Residues 676-699 (RIYRIFEQGKRSVSAPRFISPASQ) lie on the Cytoplasmic side of the membrane. A helical transmembrane segment spans residues 700-720 (LAITFILISLQLLGICVWFVV). The Extracellular segment spans residues 721 to 750 (DPSHSVVDFQDQRTLDPRFARGVLKCDISD). Residues 751 to 772 (LSLICLLGYSMLLMVTCTVYAI) form a helical membrane-spanning segment. Over 773–785 (KTRGVPETFNEAK) the chain is Cytoplasmic. A helical membrane pass occupies residues 786 to 808 (PIGFTMYTTCIVWLAFIPIFFGT). Over 809–821 (SQSADKLYIQTTT) the chain is Extracellular. Residues 822–847 (LTVSVSLSASVSLGMLYMPKVYIILF) traverse the membrane as a helical segment. The Cytoplasmic portion of the chain corresponds to 848 to 912 (HPEQNVPKRK…TYVTYTNHAI (65 aa)).

It belongs to the G-protein coupled receptor 3 family. As to quaternary structure, interacts with PICK1. Is widely distributed in the CNS. Predominant expression is seen in the granule cells of the cerebellum.

It is found in the cell membrane. Functionally, G-protein coupled receptor for glutamate. Ligand binding causes a conformation change that triggers signaling via guanine nucleotide-binding proteins (G proteins) and modulates the activity of down-stream effectors. Signaling inhibits adenylate cyclase activity. This chain is Metabotropic glutamate receptor 4 (Grm4), found in Rattus norvegicus (Rat).